The primary structure comprises 360 residues: Phospho-N-acetylmuramoyl-pentapeptide-transferase (360 aa).

10 helical membrane-spanning segments follow: residues 26-46, 74-94, 97-117, 134-154, 168-188, 199-219, 236-256, 263-283, 288-308, and 338-358; these read AILGLLTALIFSLWWGPKLIE, MGGLLILAAIFISVLLWGDLG, YVWVMLFVLGSFGLIGFIDDY, YILQSLAALLIAFFLYATAAN, VMPQLGGVFIVLAYFTIVGSS, GLAIMPTVMVAAAFALIAYLS, SGELVIVCTAIVGAGLGFLWF, VFMGDVGSLSLGAALGAIAVL, ILLVIMGGVFVMETVSVILQV, and VIVRFWIISIFLVLLGLATLK.

The protein belongs to the glycosyltransferase 4 family. MraY subfamily. The cofactor is Mg(2+).

It is found in the cell inner membrane. The enzyme catalyses UDP-N-acetyl-alpha-D-muramoyl-L-alanyl-gamma-D-glutamyl-meso-2,6-diaminopimeloyl-D-alanyl-D-alanine + di-trans,octa-cis-undecaprenyl phosphate = di-trans,octa-cis-undecaprenyl diphospho-N-acetyl-alpha-D-muramoyl-L-alanyl-D-glutamyl-meso-2,6-diaminopimeloyl-D-alanyl-D-alanine + UMP. It participates in cell wall biogenesis; peptidoglycan biosynthesis. Catalyzes the initial step of the lipid cycle reactions in the biosynthesis of the cell wall peptidoglycan: transfers peptidoglycan precursor phospho-MurNAc-pentapeptide from UDP-MurNAc-pentapeptide onto the lipid carrier undecaprenyl phosphate, yielding undecaprenyl-pyrophosphoryl-MurNAc-pentapeptide, known as lipid I. The chain is Phospho-N-acetylmuramoyl-pentapeptide-transferase from Shewanella putrefaciens (strain CN-32 / ATCC BAA-453).